The sequence spans 504 residues: Probable phenylalanine--tRNA ligase beta subunit (504 aa).

The region spanning 270–346 (IKDKSYLLSI…ICYGFNNINM (77 aa)) is the B5 domain. 4 residues coordinate Mg(2+): Asp324, Asp330, Glu333, and Asp334.

It belongs to the phenylalanyl-tRNA synthetase beta subunit family. Type 2 subfamily. Tetramer of two alpha and two beta subunits. Requires Mg(2+) as cofactor.

Its subcellular location is the cytoplasm. The enzyme catalyses tRNA(Phe) + L-phenylalanine + ATP = L-phenylalanyl-tRNA(Phe) + AMP + diphosphate + H(+). This Vairimorpha ceranae (strain BRL01) (Microsporidian parasite) protein is Probable phenylalanine--tRNA ligase beta subunit.